We begin with the raw amino-acid sequence, 340 residues long: MNICVNSLYRLSTPQFHSLYSEDVSDEALALLIGEVENGNQNCIDLLCNLALRNDDLGHKVEKLLFDLFSGKRSGSPDIDKKINQACLVLHQIANNDITKDNTEWKKLHAPSRLLYMAGSATTDLSKKIGIAHKIMGDQFAQTDQEQVGVENLWCGARMLSSDELAAATQGLVQESPLLSVNYPIGLIHPTTKENILSTQLLEKIAQSGLSHNEVFLVNTGDHWLLCLFYKLAEKIKCLIFNTYYDLNENTKQEIIEAAKIAGISESDEVNFIEMNLQNNVPNGCGLFCYHTIQLLSNAGQNDPVTTLREFAEKFLTLSVEEQALFNTQTRRQIYEYSLQ.

H223 is a catalytic residue. C285 (nucleophile) is an active-site residue.

Belongs to the peptidase C79 family.

It localises to the secreted. The protein resides in the host cytoplasm. Effector proteins function to alter host cell physiology and promote bacterial survival in host tissues. This protease targets the host cell ubiquitin pathway by acting as a deubiquitinase in infected host cells. This is Deubiquitinase SseL (sseL) from Salmonella paratyphi B (strain ATCC BAA-1250 / SPB7).